A 255-amino-acid chain; its full sequence is Ribosomal RNA small subunit methyltransferase J (255 aa).

S-adenosyl-L-methionine is bound by residues 107-108 (RD), 123-124 (ER), and Asp-178. The segment at 228–247 (ARAEPLSGRKPSHQIPGKTT) is disordered.

Belongs to the methyltransferase superfamily. RsmJ family.

The protein localises to the cytoplasm. The enzyme catalyses guanosine(1516) in 16S rRNA + S-adenosyl-L-methionine = N(2)-methylguanosine(1516) in 16S rRNA + S-adenosyl-L-homocysteine + H(+). In terms of biological role, specifically methylates the guanosine in position 1516 of 16S rRNA. In Thioalkalivibrio sulfidiphilus (strain HL-EbGR7), this protein is Ribosomal RNA small subunit methyltransferase J.